We begin with the raw amino-acid sequence, 246 residues long: UPF0246 protein stu1967 (246 aa).

The protein belongs to the UPF0246 family.

The protein is UPF0246 protein stu1967 of Streptococcus thermophilus (strain ATCC BAA-250 / LMG 18311).